A 319-amino-acid polypeptide reads, in one-letter code: MGKAAKKKYSGISTGKEVPSEQHMNTVFKFNTDLGQHILKNPLVAQGIVDKAQIKPSDIVLEVGPGTGNLTVRILEQARKVVAVEFDPRMAAELTKRVHGTPAEKKLEIMLGDFMKTELPYFDICISNTPYQISSPLVFKLINQPRPPRVSILMFQREFAMRLLARPGDSLYCRLSANVQMWANVTHVMKVGRNNFRPPPQVESSVVRIEIKTPRPPVDFNEWDGLLRIVFVRKNRTISAGFKSTAVLEIMEKNYKAYLATTNDAMVDDAKGSLAEQVKQKIETVLAETGLSDKRAGKCDQTDFLKLLYAFHQVGLHFS.

S-adenosyl-L-methionine contacts are provided by H37, L39, G64, E85, D113, and N128.

It belongs to the class I-like SAM-binding methyltransferase superfamily. rRNA adenine N(6)-methyltransferase family.

The catalysed reaction is adenosine(1779)/adenosine(1780) in 18S rRNA + 4 S-adenosyl-L-methionine = N(6)-dimethyladenosine(1779)/N(6)-dimethyladenosine(1780) in 18S rRNA + 4 S-adenosyl-L-homocysteine + 4 H(+). Its function is as follows. Specifically dimethylates two adjacent adenosines in the loop of a conserved hairpin near the 3'-end of 18S rRNA in the 40S particle. The chain is Dimethyladenosine transferase (DIM1) from Eremothecium gossypii (strain ATCC 10895 / CBS 109.51 / FGSC 9923 / NRRL Y-1056) (Yeast).